The sequence spans 364 residues: UDP-N-acetylglucosamine--N-acetylmuramyl-(pentapeptide) pyrophosphoryl-undecaprenol N-acetylglucosamine transferase (364 aa).

Residues T15 to G17, N123, R164, S191, and Q286 each bind UDP-N-acetyl-alpha-D-glucosamine.

It belongs to the glycosyltransferase 28 family. MurG subfamily.

It localises to the cell inner membrane. It catalyses the reaction di-trans,octa-cis-undecaprenyl diphospho-N-acetyl-alpha-D-muramoyl-L-alanyl-D-glutamyl-meso-2,6-diaminopimeloyl-D-alanyl-D-alanine + UDP-N-acetyl-alpha-D-glucosamine = di-trans,octa-cis-undecaprenyl diphospho-[N-acetyl-alpha-D-glucosaminyl-(1-&gt;4)]-N-acetyl-alpha-D-muramoyl-L-alanyl-D-glutamyl-meso-2,6-diaminopimeloyl-D-alanyl-D-alanine + UDP + H(+). It participates in cell wall biogenesis; peptidoglycan biosynthesis. In terms of biological role, cell wall formation. Catalyzes the transfer of a GlcNAc subunit on undecaprenyl-pyrophosphoryl-MurNAc-pentapeptide (lipid intermediate I) to form undecaprenyl-pyrophosphoryl-MurNAc-(pentapeptide)GlcNAc (lipid intermediate II). This chain is UDP-N-acetylglucosamine--N-acetylmuramyl-(pentapeptide) pyrophosphoryl-undecaprenol N-acetylglucosamine transferase, found in Prochlorococcus marinus subsp. pastoris (strain CCMP1986 / NIES-2087 / MED4).